The chain runs to 293 residues: Ribosomal RNA small subunit methyltransferase A (293 aa).

Residues N29, L31, G56, E77, D102, and N127 each coordinate S-adenosyl-L-methionine.

It belongs to the class I-like SAM-binding methyltransferase superfamily. rRNA adenine N(6)-methyltransferase family. RsmA subfamily.

It localises to the cytoplasm. The enzyme catalyses adenosine(1518)/adenosine(1519) in 16S rRNA + 4 S-adenosyl-L-methionine = N(6)-dimethyladenosine(1518)/N(6)-dimethyladenosine(1519) in 16S rRNA + 4 S-adenosyl-L-homocysteine + 4 H(+). Specifically dimethylates two adjacent adenosines (A1518 and A1519) in the loop of a conserved hairpin near the 3'-end of 16S rRNA in the 30S particle. May play a critical role in biogenesis of 30S subunits. This Geobacillus kaustophilus (strain HTA426) protein is Ribosomal RNA small subunit methyltransferase A.